A 186-amino-acid polypeptide reads, in one-letter code: Proline-rich protein 3 (186 aa).

The tract at residues 1-97 is disordered; sequence MPKRKKQNQP…LGPRSSPYGR (97 aa). Composition is skewed to pro residues over residues 33 to 44 and 67 to 79; these read MGPPSLLGPPPM and MIPPLLSLPPPPR. The segment at 153-181 adopts a C3H1-type zinc-finger fold; sequence KSDRPVCRHFSKKGHCRYEDHCAFYHPGV.

The polypeptide is Proline-rich protein 3 (Prr3) (Rattus norvegicus (Rat)).